Consider the following 254-residue polypeptide: Alcohol dehydrogenase (254 aa).

Residue 10-33 coordinates NAD(+); that stretch reads FVAGLGGIGLDTSREIVKSGPKNL. Residue Ser-138 coordinates substrate. Tyr-151 serves as the catalytic Proton acceptor.

This sequence belongs to the short-chain dehydrogenases/reductases (SDR) family. In terms of assembly, homodimer.

It catalyses the reaction a primary alcohol + NAD(+) = an aldehyde + NADH + H(+). It carries out the reaction a secondary alcohol + NAD(+) = a ketone + NADH + H(+). The sequence is that of Alcohol dehydrogenase (Adh) from Drosophila heteroneura (Fruit fly).